We begin with the raw amino-acid sequence, 176 residues long: Negative modulator of initiation of replication (176 aa).

Belongs to the SeqA family. Homodimer. Polymerizes to form helical filaments.

It is found in the cytoplasm. Functionally, negative regulator of replication initiation, which contributes to regulation of DNA replication and ensures that replication initiation occurs exactly once per chromosome per cell cycle. Binds to pairs of hemimethylated GATC sequences in the oriC region, thus preventing assembly of replication proteins and re-initiation at newly replicated origins. Repression is relieved when the region becomes fully methylated. In Hamiltonella defensa subsp. Acyrthosiphon pisum (strain 5AT), this protein is Negative modulator of initiation of replication.